The chain runs to 366 residues: Eukaryotic translation initiation factor 3 subunit H (366 aa).

The region spanning 12–161 (VKVEALVVMK…LRAFRLSPKF (150 aa)) is the MPN domain.

It belongs to the eIF-3 subunit H family. In terms of assembly, component of the eukaryotic translation initiation factor 3 (eIF-3) complex.

It localises to the cytoplasm. Component of the eukaryotic translation initiation factor 3 (eIF-3) complex, which is involved in protein synthesis of a specialized repertoire of mRNAs and, together with other initiation factors, stimulates binding of mRNA and methionyl-tRNAi to the 40S ribosome. The eIF-3 complex specifically targets and initiates translation of a subset of mRNAs involved in cell proliferation. This is Eukaryotic translation initiation factor 3 subunit H from Emericella nidulans (strain FGSC A4 / ATCC 38163 / CBS 112.46 / NRRL 194 / M139) (Aspergillus nidulans).